A 484-amino-acid chain; its full sequence is Mitochondrial metal transporter 2 (484 aa).

A mitochondrion-targeting transit peptide spans 1 to 56 (MLRISIDSIKQFGSFVPGYNNTSYHAAGRAIRTSSLYSTMISANPRRCLHSSKLLN). Residues 73 to 82 (SSQNGSNSRQ) are compositionally biased toward polar residues. Residues 73 to 114 (SSQNGSNSRQNESEGKKEGKASSVKSLLQHTHSHSHTHMHDN) form a disordered region. Over residues 83–92 (NESEGKKEGK) the composition is skewed to basic and acidic residues. Helical transmembrane passes span 132–152 (ITWI…VGGI), 158–178 (ALLA…LTLF), 209–229 (ILAM…VGPV), 256–276 (ATNV…EWVF), and 316–336 (YFFN…GLII). A disordered region spans residues 453–484 (DSKGDLEHSHDTKSTNHTHTHSDSADTHTHKH).

This sequence belongs to the cation diffusion facilitator (CDF) transporter (TC 2.A.4) family. SLC30A subfamily.

The protein resides in the mitochondrion membrane. Its function is as follows. Mitochondrial metal transporter involved in mitochondrial iron accumulation. In Saccharomyces cerevisiae (strain ATCC 204508 / S288c) (Baker's yeast), this protein is Mitochondrial metal transporter 2 (MMT2).